A 277-amino-acid polypeptide reads, in one-letter code: Protein CUSTOS (277 aa).

3 disordered regions span residues 1 to 81 (MVAP…QTTP), 108 to 182 (TQQA…QRCR), and 238 to 277 (SVNG…EPKN). The segment covering 9–18 (SDSESSSSDS) has biased composition (low complexity). Ser-62 carries the post-translational modification Phosphoserine. The segment covering 63 to 72 (RRREVNQHDE) has biased composition (basic and acidic residues). Thr-80 is modified (phosphothreonine). Positions 106-141 (KKTQQARLQQEAKEQQEAKEQQAAKEEQAAKKEEDG) form a coiled coil. A compositionally biased stretch (basic and acidic residues) spans 115–142 (QEAKEQQEAKEQQAAKEEQAAKKEEDGF). 2 positions are modified to phosphoserine: Ser-158 and Ser-238. Over residues 248 to 258 (TKKKKKKKAKK) the composition is skewed to basic residues. Positions 249–256 (KKKKKKKA) match the Nucleolar localization signal (NLS) motif. The span at 265–277 (CPPAECAAAEPKN) shows a compositional bias: low complexity.

This sequence belongs to the CUSTOS family.

It is found in the nucleus envelope. Functionally, plays a role in the regulation of Wnt signaling pathway during early development. In Rattus norvegicus (Rat), this protein is Protein CUSTOS.